A 283-amino-acid chain; its full sequence is 32 kDa beta-galactoside-binding lectin (283 aa).

2 consecutive Galectin domains span residues 17–148 (YRSL…VHWG) and 156–283 (YESG…IQIQ). Residue 217–223 (WGNEERE) coordinates a beta-D-galactoside.

As to quaternary structure, (Microbial infection) Interacts (via domain galectin 2) with goat TMEM147. Interacts (via domain galectin 1) with goat TMEM63A.

The protein resides in the membrane. Functionally, binds galactose. Exerts immunomodulatory effects on host peripheral blood mononuclear cells to down-regulate host immune response. Hemagglutinates human, dog, rabbit, chicken and mouse erythrocytes but does not hemagglutinate the erythrocytes of goat, its natural host. In Haemonchus contortus (Barber pole worm), this protein is 32 kDa beta-galactoside-binding lectin (GAL-1).